A 412-amino-acid chain; its full sequence is 43 kDa receptor-associated protein of the synapse (412 aa).

Gly-2 is lipidated: N-myristoyl glycine. 7 TPR repeats span residues 6-39, 83-116, 123-156, 163-196, 206-239, 246-279, and 286-319; these read TKQQ…SSDL, LESY…PGTR, GQVS…AHNN, CRVC…VNNY, AMSQ…ALQH, ALCL…MTEI, and VQAL…AEEV. A Phosphotyrosine modification is found at Tyr-196. An RING-type zinc finger spans residues 363–403; it reads CGLCGESIGEKNSRLQALPCSHIFHLRCLQNNGTRSCPNCR. Residue Ser-405 is modified to Phosphoserine.

Belongs to the RAPsyn family. Ubiquitinated by the BCR(KLHL8) complex, leading to its degradation.

It is found in the cell membrane. The protein resides in the postsynaptic cell membrane. It localises to the cytoplasm. Its subcellular location is the cytoskeleton. In terms of biological role, postsynaptic protein required for clustering of nicotinic acetylcholine receptors (nAChRs) at the neuromuscular junction. It may link the receptor to the underlying postsynaptic cytoskeleton, possibly by direct association with actin or spectrin. This is 43 kDa receptor-associated protein of the synapse (RAPSN) from Homo sapiens (Human).